The sequence spans 185 residues: Small ribosomal subunit protein uS4 (185 aa).

The 73-residue stretch at 107-179 (RRLQTLVYRK…NGRRKRKNNH (73 aa)) folds into the S4 RNA-binding domain. The interval 161–185 (NTPLTNPEINGRRKRKNNHAGKEDN) is disordered.

The protein belongs to the universal ribosomal protein uS4 family.

In Entamoeba histolytica (strain ATCC 30459 / HM-1:IMSS / ABRM), this protein is Small ribosomal subunit protein uS4.